We begin with the raw amino-acid sequence, 401 residues long: Coenzyme A biosynthesis bifunctional protein CoaBC (401 aa).

Positions 1-190 (MQTLAGKKIL…FQPKPLQDKS (190 aa)) are phosphopantothenoylcysteine decarboxylase. The active-site Proton donor is the Cys-159. The phosphopantothenate--cysteine ligase stretch occupies residues 191–401 (ILITAGPTRE…LKQIQTLMGH (211 aa)). CTP is bound by residues Asp-279, Lys-289, 307-310 (PDIV), Phe-326, Lys-340, and Lys-344.

This sequence in the N-terminal section; belongs to the HFCD (homo-oligomeric flavin containing Cys decarboxylase) superfamily. The protein in the C-terminal section; belongs to the PPC synthetase family. Mg(2+) serves as cofactor. Requires FMN as cofactor.

It carries out the reaction N-[(R)-4-phosphopantothenoyl]-L-cysteine + H(+) = (R)-4'-phosphopantetheine + CO2. It catalyses the reaction (R)-4'-phosphopantothenate + L-cysteine + CTP = N-[(R)-4-phosphopantothenoyl]-L-cysteine + CMP + diphosphate + H(+). It functions in the pathway cofactor biosynthesis; coenzyme A biosynthesis; CoA from (R)-pantothenate: step 2/5. The protein operates within cofactor biosynthesis; coenzyme A biosynthesis; CoA from (R)-pantothenate: step 3/5. Functionally, catalyzes two sequential steps in the biosynthesis of coenzyme A. In the first step cysteine is conjugated to 4'-phosphopantothenate to form 4-phosphopantothenoylcysteine. In the second step the latter compound is decarboxylated to form 4'-phosphopantotheine. This is Coenzyme A biosynthesis bifunctional protein CoaBC from Vibrio vulnificus (strain CMCP6).